Here is a 525-residue protein sequence, read N- to C-terminus: GMP synthase [glutamine-hydrolyzing] (525 aa).

Positions 3–200 (KILILDFGSQ…VLHVAGCKPS (198 aa)) constitute a Glutamine amidotransferase type-1 domain. The active-site Nucleophile is cysteine 79. Catalysis depends on residues histidine 174 and glutamate 176. The GMPS ATP-PPase domain occupies 201-393 (WTMPNYIDEA…LGLPHDMVYR (193 aa)). Residue 228-234 (SGGVDSS) participates in ATP binding.

Homodimer.

The enzyme catalyses XMP + L-glutamine + ATP + H2O = GMP + L-glutamate + AMP + diphosphate + 2 H(+). Its pathway is purine metabolism; GMP biosynthesis; GMP from XMP (L-Gln route): step 1/1. Functionally, catalyzes the synthesis of GMP from XMP. The sequence is that of GMP synthase [glutamine-hydrolyzing] from Chromobacterium violaceum (strain ATCC 12472 / DSM 30191 / JCM 1249 / CCUG 213 / NBRC 12614 / NCIMB 9131 / NCTC 9757 / MK).